The following is a 194-amino-acid chain: Large ribosomal subunit protein eL15 (194 aa).

The tract at residues 164-194 is disordered; the sequence is AGRKARGLRRKGRGAEKVRPSLRANFRKKRR. The span at 166–175 shows a compositional bias: basic residues; it reads RKARGLRRKG.

Belongs to the eukaryotic ribosomal protein eL15 family.

The protein is Large ribosomal subunit protein eL15 (rpl15e) of Archaeoglobus fulgidus (strain ATCC 49558 / DSM 4304 / JCM 9628 / NBRC 100126 / VC-16).